The sequence spans 364 residues: MSLQSIKYSRGSLEILDQLLLPGQSKYLVVRGVEDGWKVINKMQVRGAPAIAIVGCLSLAVEINPEDFETKKSLRQEIEGKLNYLVSARPTAVNMKIAADELITLANDLYKDEAINVTEMKQRFLDATEAMLKKDIADNRAIGANGAKAILQRVAETGAAPAGSTGSVRVLTHCNTGSLATAGYGTALGVVRQLAELGKLEHVYCTETRPYNQGARLTAYELVHEKFPATLVLDSMVAALLRAKNVAAVVVGADRVASNGDTANKIGTYQIAVVAKHHDVPFYVAAPLTSIDLAIPGGDHIIIEERPDREMTHVGEHRIAAPGINCWNPAFDVTPASLITGIITERGVFKPAELKEAITKLLES.

Asp-254 serves as the catalytic Proton donor.

The protein belongs to the eIF-2B alpha/beta/delta subunits family. MtnA subfamily.

It is found in the cytoplasm. The protein resides in the nucleus. It catalyses the reaction 5-(methylsulfanyl)-alpha-D-ribose 1-phosphate = 5-(methylsulfanyl)-D-ribulose 1-phosphate. It functions in the pathway amino-acid biosynthesis; L-methionine biosynthesis via salvage pathway; L-methionine from S-methyl-5-thio-alpha-D-ribose 1-phosphate: step 1/6. Catalyzes the interconversion of methylthioribose-1-phosphate (MTR-1-P) into methylthioribulose-1-phosphate (MTRu-1-P). The chain is Methylthioribose-1-phosphate isomerase from Drosophila yakuba (Fruit fly).